Here is a 1203-residue protein sequence, read N- to C-terminus: Protein patched homolog 2 (1203 aa).

Residues 1–57 (MTRSPPLRELPPSYTPPARTAAPQILAGSLKAPLWLRAYFQGLLFSLGCGIQRHCGK) are Cytoplasmic-facing. The chain crosses the membrane as a helical span at residues 58 to 78 (VLFLGLLAFGALALGLRMAII). Residues 79–392 (ETNLEQLWVE…LDDILHAFSE (314 aa)) are Extracellular-facing. An N-linked (GlcNAc...) asparagine glycan is attached at N370. A helical membrane pass occupies residues 393 to 413 (VSAARVVGGYLLMLAYACVTM). In terms of domain architecture, SSD spans 394–552 (SAARVVGGYL…MLVFPAILSL (159 aa)). Residues 414–428 (LRWDCAQSQGSVGLA) are Cytoplasmic-facing. The helical transmembrane segment at 429–449 (GVLLVALAVASGLGLCALLGI) threads the bilayer. At 450 to 457 (TFNAATTQ) the chain is on the extracellular side. A helical membrane pass occupies residues 458–478 (VLPFLALGIGVDDVFLLAHAF). Residues 479-501 (TEALPGTPLQERMGECLQRTGTS) are Cytoplasmic-facing. A helical transmembrane segment spans residues 502–522 (VVLTSINNMAAFLMAALVPIP). The Extracellular segment spans residues 523–531 (ALRAFSLQA). A helical membrane pass occupies residues 532 to 552 (AIVVGCTFVAVMLVFPAILSL). The Cytoplasmic segment spans residues 553–686 (DLRRRHCQRL…APLLLQSHAK (134 aa)). Residues 687–707 (AIVLVLFGALLGLSLYGATLV) form a helical membrane-spanning segment. Residues 708-963 (QDGLALTDVV…WEQYLGLRRC (256 aa)) lie on the Extracellular side of the membrane. N-linked (GlcNAc...) asparagine glycosylation is present at N812. Residues 964–984 (FLLAVCILLVCTFLVCALLLL) traverse the membrane as a helical segment. Topologically, residues 985-991 (NPWTAGL) are cytoplasmic. The helical transmembrane segment at 992-1012 (IVLVLAMMTVELFGIMGFLGI) threads the bilayer. A topological domain (extracellular) is located at residue K1013. A helical transmembrane segment spans residues 1014–1034 (LSAIPVVILVASVGIGVEFTV). At 1035–1064 (HVALGFLTTQGSRNLRAAHALEHTFAPVTD) the chain is on the cytoplasmic side. The chain crosses the membrane as a helical span at residues 1065-1085 (GAISTLLGLLMLAGSHFDFIV). The Extracellular segment spans residues 1086-1093 (RYFFAALT). A helical membrane pass occupies residues 1094–1114 (VLTLLGLLHGLVLLPVLLSIL). Residues 1115 to 1203 (GPPPEVIQMY…SSRGPGPATG (89 aa)) lie on the Cytoplasmic side of the membrane. The disordered stretch occupies residues 1171–1203 (GAYIHPAPDEPPWSPAATSSGNLSSRGPGPATG). Residues 1186-1195 (AATSSGNLSS) are compositionally biased toward polar residues.

This sequence belongs to the patched family.

The protein resides in the membrane. In terms of biological role, plays a role in the control of cellular growth. May have a role in epidermal development. May act as a receptor for Sonic hedgehog (SHH). The sequence is that of Protein patched homolog 2 (PTCH2) from Homo sapiens (Human).